A 335-amino-acid chain; its full sequence is Replication factor C subunit 4 (335 aa).

Residue 56 to 63 coordinates ATP; that stretch reads SGPPGTGK.

This sequence belongs to the activator 1 small subunits family. In terms of assembly, heterotetramer of subunits RFC2, RFC3, RFC4 and RFC5 that can form a complex with RFC1. In terms of tissue distribution, expressed in roots, leaves, shoot apical meristem (SAM), flag leaves and panicles.

It is found in the nucleus. May be involved in DNA replication and thus regulate cell proliferation. This chain is Replication factor C subunit 4 (RFC4), found in Oryza sativa subsp. japonica (Rice).